The following is a 124-amino-acid chain: Small ribosomal subunit protein uS12 (124 aa).

A 3-methylthioaspartic acid modification is found at D89.

The protein belongs to the universal ribosomal protein uS12 family. Part of the 30S ribosomal subunit. Contacts proteins S8 and S17. May interact with IF1 in the 30S initiation complex.

Its function is as follows. With S4 and S5 plays an important role in translational accuracy. Interacts with and stabilizes bases of the 16S rRNA that are involved in tRNA selection in the A site and with the mRNA backbone. Located at the interface of the 30S and 50S subunits, it traverses the body of the 30S subunit contacting proteins on the other side and probably holding the rRNA structure together. The combined cluster of proteins S8, S12 and S17 appears to hold together the shoulder and platform of the 30S subunit. The chain is Small ribosomal subunit protein uS12 (rpsL) from Mannheimia haemolytica (Pasteurella haemolytica).